Reading from the N-terminus, the 432-residue chain is Probable M18 family aminopeptidase 2 (432 aa).

Residues H86, H157, and H408 each contribute to the Zn(2+) site.

This sequence belongs to the peptidase M18 family. Zn(2+) serves as cofactor.

This chain is Probable M18 family aminopeptidase 2 (apeB), found in Streptomyces coelicolor (strain ATCC BAA-471 / A3(2) / M145).